A 228-amino-acid polypeptide reads, in one-letter code: Cytochrome c oxidase subunit 2 (228 aa).

The Mitochondrial intermembrane portion of the chain corresponds to Met1–His26. The chain crosses the membrane as a helical span at residues Ala27–Leu47. Residues Asn48 to Thr60 lie on the Mitochondrial matrix side of the membrane. The chain crosses the membrane as a helical span at residues Val61–Leu81. Over Arg82–Pro228 the chain is Mitochondrial intermembrane. 6 residues coordinate Cu cation: His161, Cys196, Glu198, Cys200, His204, and Met207. A Mg(2+)-binding site is contributed by Glu198.

The protein belongs to the cytochrome c oxidase subunit 2 family. As to quaternary structure, component of the cytochrome c oxidase (complex IV, CIV), a multisubunit enzyme composed of a catalytic core of 3 subunits and several supernumerary subunits. The complex exists as a monomer or a dimer and forms supercomplexes (SCs) in the inner mitochondrial membrane with ubiquinol-cytochrome c oxidoreductase (cytochrome b-c1 complex, complex III, CIII). Requires Cu cation as cofactor.

The protein localises to the mitochondrion inner membrane. It catalyses the reaction 4 Fe(II)-[cytochrome c] + O2 + 8 H(+)(in) = 4 Fe(III)-[cytochrome c] + 2 H2O + 4 H(+)(out). In terms of biological role, component of the cytochrome c oxidase, the last enzyme in the mitochondrial electron transport chain which drives oxidative phosphorylation. The respiratory chain contains 3 multisubunit complexes succinate dehydrogenase (complex II, CII), ubiquinol-cytochrome c oxidoreductase (cytochrome b-c1 complex, complex III, CIII) and cytochrome c oxidase (complex IV, CIV), that cooperate to transfer electrons derived from NADH and succinate to molecular oxygen, creating an electrochemical gradient over the inner membrane that drives transmembrane transport and the ATP synthase. Cytochrome c oxidase is the component of the respiratory chain that catalyzes the reduction of oxygen to water. Electrons originating from reduced cytochrome c in the intermembrane space (IMS) are transferred via the dinuclear copper A center (CU(A)) of subunit 2 and heme A of subunit 1 to the active site in subunit 1, a binuclear center (BNC) formed by heme A3 and copper B (CU(B)). The BNC reduces molecular oxygen to 2 water molecules using 4 electrons from cytochrome c in the IMS and 4 protons from the mitochondrial matrix. This Lumbricus terrestris (Common earthworm) protein is Cytochrome c oxidase subunit 2 (COII).